The primary structure comprises 201 residues: Recombination protein RecR (201 aa).

The C4-type zinc finger occupies 57-74; sequence CSICGNITATDTDPCVIC. The Toprim domain occupies 82–178; it reads STVFVVENSR…AVTRLAHGLA (97 aa).

The protein belongs to the RecR family.

Its function is as follows. May play a role in DNA repair. It seems to be involved in an RecBC-independent recombinational process of DNA repair. It may act with RecF and RecO. The protein is Recombination protein RecR of Leuconostoc mesenteroides subsp. mesenteroides (strain ATCC 8293 / DSM 20343 / BCRC 11652 / CCM 1803 / JCM 6124 / NCDO 523 / NBRC 100496 / NCIMB 8023 / NCTC 12954 / NRRL B-1118 / 37Y).